A 64-amino-acid chain; its full sequence is ICEBs1 excisionase (64 aa).

Functionally, required for the excision of the integrative and conjugative element ICEBs1. Excision of ICEBs1 requires two sites, attL and attR, at the left and right ends of the integrated ICEBs1. The sequence is that of ICEBs1 excisionase (xis) from Bacillus subtilis (strain 168).